A 411-amino-acid chain; its full sequence is Serpin A3-2 (411 aa).

Residues 1–24 (MRAERTSFLLALGLLVAGIRSVHC) form the signal peptide. N-linked (GlcNAc...) asparagine glycosylation is found at Asn100, Asn180, Asn230, and Asn264.

It belongs to the serpin family. In terms of assembly, homodimer.

The protein localises to the cytoplasmic vesicle. Its subcellular location is the secretory vesicle. It localises to the chromaffin granule. It is found in the secreted. Its function is as follows. Serine protease inhibitor. The sequence is that of Serpin A3-2 from Bos taurus (Bovine).